A 509-amino-acid chain; its full sequence is Type II methyltransferase M.BsoBI (509 aa).

This sequence belongs to the N(4)/N(6)-methyltransferase family. N(4) subfamily.

The catalysed reaction is a 2'-deoxycytidine in DNA + S-adenosyl-L-methionine = an N(4)-methyl-2'-deoxycytidine in DNA + S-adenosyl-L-homocysteine + H(+). In terms of biological role, an alpha subtype methylase that recognizes the double-stranded sequence 5'-CYCGRG-3', methylates C-1 on both strands, and protects the DNA from cleavage by the BsoBI endonuclease. This is Type II methyltransferase M.BsoBI from Geobacillus stearothermophilus (Bacillus stearothermophilus).